The chain runs to 132 residues: Small ribosomal subunit protein uS8 (132 aa).

The protein belongs to the universal ribosomal protein uS8 family. As to quaternary structure, part of the 30S ribosomal subunit. Contacts proteins S5 and S12.

In terms of biological role, one of the primary rRNA binding proteins, it binds directly to 16S rRNA central domain where it helps coordinate assembly of the platform of the 30S subunit. The protein is Small ribosomal subunit protein uS8 of Xylella fastidiosa (strain M23).